We begin with the raw amino-acid sequence, 154 residues long: MGVQKHEQEITSSVPAEKMFHGLILDIDNILPKAAPGAYKNVEIKGDGGVGTIKHITLPDGGPVTTMTLRTDGLDKKGFTIDYSVIDGDVLMGFIDKIENHLSVVPTADGGSTTKTTAIFHTKGDAVVPEENIKYAEAQNTMLFKAVEAYLIAN.

It belongs to the BetVI family. In terms of tissue distribution, expressed in roots.

The polypeptide is Dau c 1 isoallergen Dau c 1.0301 (Daucus carota (Wild carrot)).